A 128-amino-acid chain; its full sequence is Fluoride-specific ion channel FluC (128 aa).

Helical transmembrane passes span 5–25, 35–55, 67–87, and 96–116; these read IVAIFVGAGLGALLRWFLSLA, LGTLAANLIGGYVIGIAAVVF, LFVITGFLGGLTTFSTYSVEV, and FGWAFAVAALHLTGSFALTAL. Na(+)-binding residues include glycine 75 and threonine 78.

This sequence belongs to the fluoride channel Fluc/FEX (TC 1.A.43) family.

Its subcellular location is the cell inner membrane. It catalyses the reaction fluoride(in) = fluoride(out). Its activity is regulated as follows. Na(+) is not transported, but it plays an essential structural role and its presence is essential for fluoride channel function. In terms of biological role, fluoride-specific ion channel. Important for reducing fluoride concentration in the cell, thus reducing its toxicity. The polypeptide is Fluoride-specific ion channel FluC (Burkholderia lata (strain ATCC 17760 / DSM 23089 / LMG 22485 / NCIMB 9086 / R18194 / 383)).